Reading from the N-terminus, the 310-residue chain is D-alanine--D-alanine ligase (310 aa).

An ATP-grasp domain is found at 107–305 (KKVWQSAGLP…FSALVQSILA (199 aa)). Position 134–189 (134–189 (EQLHCQDFVIKPALEGSSVGVSRVKNQEQLAAAIPFAGGARAKIMAEPWIVGRELT)) interacts with ATP. The Mg(2+) site is built by Asp-259, Glu-272, and Asn-274.

It belongs to the D-alanine--D-alanine ligase family. The cofactor is Mg(2+). It depends on Mn(2+) as a cofactor.

The protein localises to the cytoplasm. It catalyses the reaction 2 D-alanine + ATP = D-alanyl-D-alanine + ADP + phosphate + H(+). It functions in the pathway cell wall biogenesis; peptidoglycan biosynthesis. In terms of biological role, cell wall formation. The chain is D-alanine--D-alanine ligase from Dichelobacter nodosus (strain VCS1703A).